Here is a 204-residue protein sequence, read N- to C-terminus: MVSLKTGILGGTFDPIHTGHLILAEEVKKRLGLDEIIFIPTGQPYYKADKTISPAADRLNMVKLAISGKPYFRVMDIEIKRSGPTYTADTLNDLKLILPEKTELYFILGWDNLEALPRWHKASEIIRLCQLVAVPRIGQAKPDVDELDDKLPGLQQSLIMLSKPEVDVSSSLVRERLENGQGVEHLVPEAVAAYIKEHGLYHRQ.

Belongs to the NadD family.

The enzyme catalyses nicotinate beta-D-ribonucleotide + ATP + H(+) = deamido-NAD(+) + diphosphate. It participates in cofactor biosynthesis; NAD(+) biosynthesis; deamido-NAD(+) from nicotinate D-ribonucleotide: step 1/1. Functionally, catalyzes the reversible adenylation of nicotinate mononucleotide (NaMN) to nicotinic acid adenine dinucleotide (NaAD). This is Probable nicotinate-nucleotide adenylyltransferase from Dehalococcoides mccartyi (strain ATCC BAA-2266 / KCTC 15142 / 195) (Dehalococcoides ethenogenes (strain 195)).